Consider the following 641-residue polypeptide: MGKIIGIDLGTTNSCVAIMDGGKARVIENSEGDRTTPSIVAYTKDGEVLVGASAKRQAVTNPKNTFYAVKRLIGRKFTDAEVQKDIAHVPYSILAHDNGDAWVATSDAKKMAPQEISAKVLEKMKKTAEDFLGEKVTEAVITVPAYFNDSQRQATKDAGRIAGLDVKRIINEPTAAALAYGLDKGDNKDRKIVVYDLGGGTFDVSVIEIANVDGEKQFEVLATNGDTFLGGEDFDNRVIEYLVEEFNKDQGIDLRKDPLALQRLKDAAERAKIELSSAQQTEVNLPYVTADASGPKHLNIKLTRAKLESLVEELIRKSIEPCRVALNDAGLRSSDISEVILVGGQTRMPKVQQAVTEFFGKEPRKDVNPDEAVALGAAIQGGVLGGDVKDVLLLDVTPLSLGIETMGGVFTKIIEKNTTIPTKASQVFSTAEDNQSAVTVHVLQGEREQARFNKSLAKFDLSGIEPAPRGLPQVEVSFDIDANGILHVSAKDKKTNKEQKVEIKAGSGLSEEEIARMVADAEANREEDKKFQELVQARNQADALIHGTRSAITEHGSKVGGDVIGKVEAALADLETAMKGDDKAQIEAKSKVLEEAGQSLFAAASAEQGGAAPGADAGNAGKAQDDVVDAEFTEVKDDKKS.

Thr201 carries the post-translational modification Phosphothreonine; by autocatalysis. Residues 604-622 show a composition bias toward low complexity; it reads ASAEQGGAAPGADAGNAGK. Residues 604–625 form a disordered region; that stretch reads ASAEQGGAAPGADAGNAGKAQD.

It belongs to the heat shock protein 70 family.

Acts as a chaperone. This is Chaperone protein DnaK from Stenotrophomonas maltophilia (strain R551-3).